A 602-amino-acid polypeptide reads, in one-letter code: ATP-dependent RNA helicase DeaD (602 aa).

The short motif at 6–34 is the Q motif element; it reads MTFSSFGLNSCIITALNDIGYVQPSPIQA. The 172-residue stretch at 37 to 208 folds into the Helicase ATP-binding domain; the sequence is IPYLIKGKDV…RRFMKNPKEI (172 aa). 50–57 is an ATP binding site; it reads AQTGSGKT. Positions 156-159 match the DEAD box motif; that stretch reads DEAD. A Helicase C-terminal domain is found at 231-378; that stretch reads KTDALIRFLE…EVNLPKSDFL (148 aa).

It belongs to the DEAD box helicase family. DeaD/CsdA subfamily.

The protein localises to the cytoplasm. The enzyme catalyses ATP + H2O = ADP + phosphate + H(+). Functionally, DEAD-box RNA helicase involved in various cellular processes at low temperature, including ribosome biogenesis, mRNA degradation and translation initiation. In Buchnera aphidicola subsp. Baizongia pistaciae (strain Bp), this protein is ATP-dependent RNA helicase DeaD.